The chain runs to 246 residues: Carboxy-S-adenosyl-L-methionine synthase (246 aa).

Residues Tyr43, 68–70, 93–94, 121–122, Asn136, and Arg203 each bind S-adenosyl-L-methionine; these read GCS, DN, and DI.

This sequence belongs to the class I-like SAM-binding methyltransferase superfamily. Cx-SAM synthase family. As to quaternary structure, homodimer.

The enzyme catalyses prephenate + S-adenosyl-L-methionine = carboxy-S-adenosyl-L-methionine + 3-phenylpyruvate + H2O. Catalyzes the conversion of S-adenosyl-L-methionine (SAM) to carboxy-S-adenosyl-L-methionine (Cx-SAM). The polypeptide is Carboxy-S-adenosyl-L-methionine synthase (Vibrio cholerae serotype O1 (strain ATCC 39541 / Classical Ogawa 395 / O395)).